Consider the following 464-residue polypeptide: tRNA modification GTPase MnmE (464 aa).

Positions 29, 91, and 131 each coordinate (6S)-5-formyl-5,6,7,8-tetrahydrofolate. The region spanning 226 to 387 is the TrmE-type G domain; it reads GLKVALAGKP…LINYLLKKCG (162 aa). Asn-236 is a binding site for K(+). GTP contacts are provided by residues 236 to 241, 255 to 261, and 280 to 283; these read NVGKSS, TDLPGTT, and DTAG. Ser-240 provides a ligand contact to Mg(2+). Positions 255, 257, and 260 each coordinate K(+). Thr-261 serves as a coordination point for Mg(2+). Lys-464 is a binding site for (6S)-5-formyl-5,6,7,8-tetrahydrofolate.

Belongs to the TRAFAC class TrmE-Era-EngA-EngB-Septin-like GTPase superfamily. TrmE GTPase family. In terms of assembly, homodimer. Heterotetramer of two MnmE and two MnmG subunits. Requires K(+) as cofactor.

It is found in the cytoplasm. Exhibits a very high intrinsic GTPase hydrolysis rate. Involved in the addition of a carboxymethylaminomethyl (cmnm) group at the wobble position (U34) of certain tRNAs, forming tRNA-cmnm(5)s(2)U34. The polypeptide is tRNA modification GTPase MnmE (Prochlorococcus marinus (strain NATL1A)).